Here is a 423-residue protein sequence, read N- to C-terminus: Serine--tRNA ligase (423 aa).

Residue 231-233 (TGE) participates in L-serine binding. 262-264 (RQE) contributes to the ATP binding site. Glu-285 provides a ligand contact to L-serine. Residue 349 to 352 (EISS) coordinates ATP. Ser-385 contributes to the L-serine binding site.

This sequence belongs to the class-II aminoacyl-tRNA synthetase family. Type-1 seryl-tRNA synthetase subfamily. Homodimer. The tRNA molecule binds across the dimer.

The protein resides in the cytoplasm. The enzyme catalyses tRNA(Ser) + L-serine + ATP = L-seryl-tRNA(Ser) + AMP + diphosphate + H(+). It catalyses the reaction tRNA(Sec) + L-serine + ATP = L-seryl-tRNA(Sec) + AMP + diphosphate + H(+). It participates in aminoacyl-tRNA biosynthesis; selenocysteinyl-tRNA(Sec) biosynthesis; L-seryl-tRNA(Sec) from L-serine and tRNA(Sec): step 1/1. Functionally, catalyzes the attachment of serine to tRNA(Ser). Is also able to aminoacylate tRNA(Sec) with serine, to form the misacylated tRNA L-seryl-tRNA(Sec), which will be further converted into selenocysteinyl-tRNA(Sec). The chain is Serine--tRNA ligase from Phytoplasma mali (strain AT).